Here is a 668-residue protein sequence, read N- to C-terminus: Biosynthetic arginine decarboxylase (668 aa).

Lys105 bears the N6-(pyridoxal phosphate)lysine mark. Substrate is bound at residue 286–296; that stretch reads LDVGGGLGVDY.

This sequence belongs to the Orn/Lys/Arg decarboxylase class-II family. SpeA subfamily. It depends on Mg(2+) as a cofactor. Requires pyridoxal 5'-phosphate as cofactor.

The enzyme catalyses L-arginine + H(+) = agmatine + CO2. Catalyzes the biosynthesis of agmatine from arginine. The polypeptide is Biosynthetic arginine decarboxylase (Rhodopirellula baltica (strain DSM 10527 / NCIMB 13988 / SH1)).